A 417-amino-acid chain; its full sequence is Tryptophan decarboxylase (417 aa).

Lysine 263 carries the post-translational modification N6-(pyridoxal phosphate)lysine.

Belongs to the group II decarboxylase family. The cofactor is pyridoxal 5'-phosphate.

The protein resides in the cytoplasm. It catalyses the reaction L-tryptophan + H(+) = tryptamine + CO2. Its activity is regulated as follows. Inhibited by (S)-alpha-fluoromethyltryptophan. Its function is as follows. Catalyzes the decarboxylation of tryptophan to tryptamine. Tryptamine is a neurotransmitter that induces the release of serotonin, which is suggested to modulate gastrointestinal motility. Therefore, the tryptophan decarboxylase from the gut bacteria Clostridium sporogenes (strain ATCC 15579) may influence host brain and behavior. Has weak activity with tyrosine. Activity against phenylalanine is undetectable. The protein is Tryptophan decarboxylase of Clostridium sporogenes (strain ATCC 15579).